A 344-amino-acid chain; its full sequence is Gas vesicle ATPase GvpN2 (344 aa).

The disordered stretch occupies residues 1–55 (MTDTSRNRKVRGSKIRSSRSDKRQSRGSEDKELKRLADARDTDSEQAGDRVGDAF). Basic residues predominate over residues 7–17 (NRKVRGSKIRS). Positions 18 to 52 (SRSDKRQSRGSEDKELKRLADARDTDSEQAGDRVG) are enriched in basic and acidic residues. 89–96 (GPTGCGKT) lines the ATP pocket.

This sequence belongs to the CbbQ/NirQ/NorQ/GpvN family. As to quaternary structure, forms homodimers, a GvpN-GvpO heterodimer, interacts with GvpC and GvpL, might interact with GvpA.

The protein localises to the gas vesicle. Its subcellular location is the cytoplasm. It carries out the reaction ATP + H2O = ADP + phosphate + H(+). In terms of biological role, an ATPase that functions in gas vesicle formation. A minor component of the gas vesicle, also found in soluble extracts. Gas vesicles are hollow, gas filled proteinaceous nanostructures found in several microbial planktonic microorganisms. They allow positioning of halobacteria at the optimal depth for growth in the poorly aerated, shallow brine pools of their habitat. Its function is as follows. Expression of 2 c-vac DNA fragments containing 2 divergently transcribed regions (gvpE-gvpF-gvpG-gvpH-gvpI-gvpJ-gvpK-gvpL-gvpM and gvpA-gvpC-gvpN-gvpO) allows H.volcanii to produce gas vesicles. This chain is Gas vesicle ATPase GvpN2, found in Halobacterium salinarum (strain ATCC 700922 / JCM 11081 / NRC-1) (Halobacterium halobium).